The sequence spans 289 residues: 4-hydroxy-3-methylbut-2-enyl diphosphate reductase (289 aa).

[4Fe-4S] cluster is bound at residue cysteine 12. Residues histidine 41 and histidine 84 each coordinate (2E)-4-hydroxy-3-methylbut-2-enyl diphosphate. Dimethylallyl diphosphate is bound by residues histidine 41 and histidine 84. 2 residues coordinate isopentenyl diphosphate: histidine 41 and histidine 84. Cysteine 106 provides a ligand contact to [4Fe-4S] cluster. Histidine 134 provides a ligand contact to (2E)-4-hydroxy-3-methylbut-2-enyl diphosphate. Histidine 134 contributes to the dimethylallyl diphosphate binding site. An isopentenyl diphosphate-binding site is contributed by histidine 134. Glutamate 136 functions as the Proton donor in the catalytic mechanism. (2E)-4-hydroxy-3-methylbut-2-enyl diphosphate is bound at residue serine 172. Cysteine 200 is a [4Fe-4S] cluster binding site. Positions 229, 231, and 273 each coordinate (2E)-4-hydroxy-3-methylbut-2-enyl diphosphate. 3 residues coordinate dimethylallyl diphosphate: serine 229, asparagine 231, and serine 273. Positions 229, 231, and 273 each coordinate isopentenyl diphosphate.

Belongs to the IspH family. [4Fe-4S] cluster serves as cofactor.

The enzyme catalyses isopentenyl diphosphate + 2 oxidized [2Fe-2S]-[ferredoxin] + H2O = (2E)-4-hydroxy-3-methylbut-2-enyl diphosphate + 2 reduced [2Fe-2S]-[ferredoxin] + 2 H(+). It carries out the reaction dimethylallyl diphosphate + 2 oxidized [2Fe-2S]-[ferredoxin] + H2O = (2E)-4-hydroxy-3-methylbut-2-enyl diphosphate + 2 reduced [2Fe-2S]-[ferredoxin] + 2 H(+). Its pathway is isoprenoid biosynthesis; dimethylallyl diphosphate biosynthesis; dimethylallyl diphosphate from (2E)-4-hydroxy-3-methylbutenyl diphosphate: step 1/1. It participates in isoprenoid biosynthesis; isopentenyl diphosphate biosynthesis via DXP pathway; isopentenyl diphosphate from 1-deoxy-D-xylulose 5-phosphate: step 6/6. Functionally, catalyzes the conversion of 1-hydroxy-2-methyl-2-(E)-butenyl 4-diphosphate (HMBPP) into a mixture of isopentenyl diphosphate (IPP) and dimethylallyl diphosphate (DMAPP). Acts in the terminal step of the DOXP/MEP pathway for isoprenoid precursor biosynthesis. The protein is 4-hydroxy-3-methylbut-2-enyl diphosphate reductase of Opitutus terrae (strain DSM 11246 / JCM 15787 / PB90-1).